We begin with the raw amino-acid sequence, 147 residues long: Large ribosomal subunit protein uL13 (147 aa).

The protein belongs to the universal ribosomal protein uL13 family. As to quaternary structure, part of the 50S ribosomal subunit.

Functionally, this protein is one of the early assembly proteins of the 50S ribosomal subunit, although it is not seen to bind rRNA by itself. It is important during the early stages of 50S assembly. The protein is Large ribosomal subunit protein uL13 of Mycobacteroides abscessus (strain ATCC 19977 / DSM 44196 / CCUG 20993 / CIP 104536 / JCM 13569 / NCTC 13031 / TMC 1543 / L948) (Mycobacterium abscessus).